A 335-amino-acid polypeptide reads, in one-letter code: Pro-cathepsin H (335 aa).

The signal sequence occupies residues 1 to 22 (MWAVLSLLCAGAWLLGPPACGA). Residues 23–97 (SNLAVSSFEK…DEIRHKYLWS (75 aa)) constitute a propeptide that is removed on maturation. N-linked (GlcNAc...) asparagine glycans are attached at residues Asn72 and Asn101. Intrachain disulfides connect Cys102/Cys327, Cys138/Cys181, Cys172/Cys214, and Cys272/Cys322. Residues 107 to 115 (GNYLRGTGP) constitute a propeptide that is removed on maturation. Cys141 is a catalytic residue. Residue Asn230 is glycosylated (N-linked (GlcNAc...) asparagine). Active-site residues include His281 and Asn301.

It belongs to the peptidase C1 family. In terms of assembly, composed of cathepsin H and mini chain; disulfide-linked. Cathepsin H may be split into heavy and light chain. All chains are held together by disulfide bonds.

The protein resides in the lysosome. The enzyme catalyses Hydrolysis of proteins, acting as an aminopeptidase (notably, cleaving Arg-|-Xaa bonds) as well as an endopeptidase.. In terms of biological role, important for the overall degradation of proteins in lysosomes. The chain is Pro-cathepsin H (CTSH) from Sus scrofa (Pig).